Consider the following 396-residue polypeptide: Elongation factor Tu 1 (396 aa).

Residues 10-206 (KPHVNVGTIG…ALDSYIPLPE (197 aa)) enclose the tr-type G domain. The G1 stretch occupies residues 19–26 (GHVDHGKT). 19–26 (GHVDHGKT) contacts GTP. A Mg(2+)-binding site is contributed by Thr-26. The tract at residues 60–64 (GITIN) is G2. Residues 81-84 (DCPG) are G3. Residues 81-85 (DCPGH) and 136-139 (NKCD) each bind GTP. The G4 stretch occupies residues 136-139 (NKCD). A G5 region spans residues 174-176 (SAK).

The protein belongs to the TRAFAC class translation factor GTPase superfamily. Classic translation factor GTPase family. EF-Tu/EF-1A subfamily. Monomer.

The protein localises to the cytoplasm. It carries out the reaction GTP + H2O = GDP + phosphate + H(+). GTP hydrolase that promotes the GTP-dependent binding of aminoacyl-tRNA to the A-site of ribosomes during protein biosynthesis. The sequence is that of Elongation factor Tu 1 from Albidiferax ferrireducens (strain ATCC BAA-621 / DSM 15236 / T118) (Rhodoferax ferrireducens).